We begin with the raw amino-acid sequence, 176 residues long: Ribosome maturation factor RimM (176 aa).

Residues 96 to 176 (PEDEFYWRDL…QILVDWDPDF (81 aa)) enclose the PRC barrel domain.

It belongs to the RimM family. Binds ribosomal protein uS19.

It localises to the cytoplasm. Its function is as follows. An accessory protein needed during the final step in the assembly of 30S ribosomal subunit, possibly for assembly of the head region. Essential for efficient processing of 16S rRNA. May be needed both before and after RbfA during the maturation of 16S rRNA. It has affinity for free ribosomal 30S subunits but not for 70S ribosomes. The chain is Ribosome maturation factor RimM from Shewanella woodyi (strain ATCC 51908 / MS32).